The chain runs to 332 residues: Tetraacyldisaccharide 4'-kinase (332 aa).

58 to 65 (TVGGSGKT) contributes to the ATP binding site.

This sequence belongs to the LpxK family.

The enzyme catalyses a lipid A disaccharide + ATP = a lipid IVA + ADP + H(+). Its pathway is glycolipid biosynthesis; lipid IV(A) biosynthesis; lipid IV(A) from (3R)-3-hydroxytetradecanoyl-[acyl-carrier-protein] and UDP-N-acetyl-alpha-D-glucosamine: step 6/6. In terms of biological role, transfers the gamma-phosphate of ATP to the 4'-position of a tetraacyldisaccharide 1-phosphate intermediate (termed DS-1-P) to form tetraacyldisaccharide 1,4'-bis-phosphate (lipid IVA). This is Tetraacyldisaccharide 4'-kinase from Shewanella piezotolerans (strain WP3 / JCM 13877).